The primary structure comprises 568 residues: Estrogen receptor beta-1 (568 aa).

Residues 12–169 (SEYAEGDSSL…SLRGKADMHY (158 aa)) are modulating. NR C4-type zinc fingers lie at residues 170–190 (CAVCSDYASGYHYGVWSCEGC) and 206–230 (CPATNQCTIDKNRRKSCQACRLRKC). Residues 170 to 235 (CAVCSDYASG…RLRKCYEVGM (66 aa)) constitute a DNA-binding region (nuclear receptor). An NR LBD domain is found at 292 to 528 (SPEELIARIM…DLLLEMLDAH (237 aa)).

The protein belongs to the nuclear hormone receptor family. NR3 subfamily. In terms of assembly, binds DNA as a homodimer. Can form a heterodimer with ER-alpha.

It is found in the nucleus. In terms of biological role, binds estrogens with an affinity similar to that of ER-alpha, and activates expression of reporter genes containing estrogen response elements (ERE) in an estrogen-dependent manner. This is Estrogen receptor beta-1 (esr2a) from Carassius auratus (Goldfish).